We begin with the raw amino-acid sequence, 299 residues long: ATP synthase gamma chain (299 aa).

This sequence belongs to the ATPase gamma chain family. In terms of assembly, F-type ATPases have 2 components, CF(1) - the catalytic core - and CF(0) - the membrane proton channel. CF(1) has five subunits: alpha(3), beta(3), gamma(1), delta(1), epsilon(1). CF(0) has three main subunits: a, b and c.

The protein resides in the cell membrane. In terms of biological role, produces ATP from ADP in the presence of a proton gradient across the membrane. The gamma chain is believed to be important in regulating ATPase activity and the flow of protons through the CF(0) complex. This chain is ATP synthase gamma chain, found in Leifsonia xyli subsp. xyli (strain CTCB07).